Reading from the N-terminus, the 146-residue chain is Snaclec CTL-Eoc124 (146 aa).

An N-terminal signal peptide occupies residues 1-23; the sequence is MGRFISVSFGLLVVFLSLSGTGA. Cystine bridges form between C25-C36, C53-C142, and C119-C134. The C-type lectin domain maps to 32–143; sequence YQGHCYRVFN…CSRTNNVACK (112 aa).

It belongs to the snaclec family. As to quaternary structure, heterodimer; disulfide-linked. Expressed by the venom gland.

It is found in the secreted. Functionally, interferes with one step of hemostasis (modulation of platelet aggregation, or coagulation cascade, for example). In Echis ocellatus (Ocellated saw-scaled viper), this protein is Snaclec CTL-Eoc124.